Here is a 437-residue protein sequence, read N- to C-terminus: Vacuolar cation/proton exchanger 2 (437 aa).

A disordered region spans residues 1 to 29 (MMGAEKAEGMEELELEEGGGSPSPSPMTA). Residues 1–65 (MMGAEKAEGM…KWRRALTSVR (65 aa)) lie on the Cytoplasmic side of the membrane. A helical transmembrane segment spans residues 66–86 (VVILQAKINVLLPFGPLAVML). At 87–88 (HY) the chain is on the extracellular side. A helical membrane pass occupies residues 89-109 (LSANHQGWVFLFSLIGITPLA). Over 110-126 (ERLGYATEQLALYTGPT) the chain is Cytoplasmic. Residues 127-147 (IGGLLNATFGNATEMIISLYA) form a helical membrane-spanning segment. The interval 136–171 (GNATEMIISLYALKNGMIRVVQQSLLGSILSNMLLV) is cation selection. At 148 to 161 (LKNGMIRVVQQSLL) the chain is on the extracellular side. Residues 162 to 182 (GSILSNMLLVLGCAFFAGGLV) traverse the membrane as a helical segment. The Cytoplasmic segment spans residues 183–194 (HPSRDQVFNKAS). Residues 195–215 (AVVNSGLLLMAVLGLMFPAVL) traverse the membrane as a helical segment. Over 216–228 (HFTHSEVQYGKSE) the chain is Extracellular. A helical transmembrane segment spans residues 229–249 (VSLSRFSSCIMLVAYASYLFF). Residues 250 to 281 (QLKSQRSLYSPIGEQEEEVTEDEEEEKEITQG) are Cytoplasmic-facing. The chain crosses the membrane as a helical span at residues 282–302 (EAICWLFVLTIWISILSGYLV). Topologically, residues 303–310 (DAIQGASE) are extracellular. A helical membrane pass occupies residues 311 to 331 (SLNMPVAFISVILLPIVGNAA). Residues 328–363 (GNAAEHASAIMFAMKDKLDITLGVAIGSSTQISMFV) form a cation selection region. The Cytoplasmic portion of the chain corresponds to 332 to 352 (EHASAIMFAMKDKLDITLGVA). Residues 353–373 (IGSSTQISMFVIPFCVVIGWI) traverse the membrane as a helical segment. Over 374–379 (MGQQMD) the chain is Extracellular. A helical membrane pass occupies residues 380 to 400 (LNFQLFETATLFITVLVVAFM). Topologically, residues 401–408 (LQEGTSNY) are cytoplasmic. The helical transmembrane segment at 409–429 (FKGLMLILCYLIVAASFFVHV) threads the bilayer. At 430 to 437 (DPDSSNNK) the chain is on the extracellular side.

The protein belongs to the Ca(2+):cation antiporter (CaCA) (TC 2.A.19) family. Cation/proton exchanger (CAX) subfamily. In terms of tissue distribution, expressed in roots and shoots.

It localises to the vacuole membrane. Its function is as follows. Vacuolar cation/proton exchanger (CAX). Translocates Ca(2+) and other metal ions into vacuoles using the proton gradient formed by H(+)-ATPase and H(+)-pyrophosphatase. The polypeptide is Vacuolar cation/proton exchanger 2 (CAX2) (Oryza sativa subsp. japonica (Rice)).